A 1460-amino-acid chain; its full sequence is Centrosomal protein of 164 kDa (1460 aa).

An interaction with ATRIP region spans residues 1-194; that stretch reads MAGRPLRIGD…PSQGLKTSAY (194 aa). Positions 56 to 89 constitute a WW domain; the sequence is APLPGEWKPCQDITGDIYYFNFANGQSMWDHPCD. Positions 107 to 135 are disordered; the sequence is GAIKKKKKKKEKKDKKDRDPPKSSLALGS. A compositionally biased stretch (basic residues) spans 109–119; it reads IKKKKKKKEKK. Ser186 carries the phosphoserine; by ATR and ATM modification. Residue Ser201 is modified to Phosphoserine. Disordered regions lie at residues 213–412, 440–593, and 658–719; these read GLGE…HGLD, AQQP…AALK, and EEAR…QKNR. A compositionally biased stretch (acidic residues) spans 217 to 227; the sequence is ETNEEDEEESD. The segment covering 256–270 has biased composition (basic and acidic residues); the sequence is ESLRTSQPEEKKDVS. The span at 285–296 shows a compositional bias: low complexity; sequence SSPGADSSLSSA. Basic and acidic residues-rich tracts occupy residues 310-323 and 357-367; these read LPEKEENEKSEPKI and EGSRREEAAKE. The segment covering 453–464 has biased composition (low complexity); sequence QSSQDELQSKQS. A compositionally biased stretch (basic and acidic residues) spans 465 to 481; that stretch reads KGLEERLSPPLPHEERA. Residues 514–525 are compositionally biased toward low complexity; it reads SAASLSLQLSLQ. Residues 537 to 546 show a composition bias toward basic and acidic residues; sequence EKGKEQHSQA. Ser566 carries the phosphoserine modification. Composition is skewed to basic and acidic residues over residues 658 to 668 and 686 to 719; these read EEARMREEESQ and DQIRAEQEASLQKLREELESQQKAERASLEQKNR. A coiled-coil region spans residues 1154–1206; it reads GIKALEDMRKNLEKETRHLDEMKSAMRKGHNLLKKKEEKLNQLESSLWEEASD. Residues 1290 to 1310 form a disordered region; it reads PPPLLASMPAQLPPRDPKSTP. Phosphoserine is present on residues Ser1386, Ser1388, and Ser1443.

Interacts (via N-terminus) with ATRIP. Interacts with ATM, ATR and MDC1. Interacts with XPA (via N-terminus) upon UV irradiation. Interacts with CEP83, CCDC92, TTBK2, DVL3, NPHP3 and weakly with NPHP4. Interacts with DZIP1. Post-translationally, phosphorylation at Ser-186 is induced upon DNA-damage caused by treatment with IR irradiation, UV irradiation, hydroxyurea or amphidicolin. Also MDC1-mediated chromatin remodeling is critical for DNA damage-induced phosphorylation. Expressed in several cell lines.

The protein localises to the cytoplasm. The protein resides in the cytoskeleton. Its subcellular location is the microtubule organizing center. It is found in the centrosome. It localises to the centriole. The protein localises to the nucleus. Plays a role in microtubule organization and/or maintenance for the formation of primary cilia (PC), a microtubule-based structure that protrudes from the surface of epithelial cells. Plays a critical role in G2/M checkpoint and nuclear divisions. A key player in the DNA damage-activated ATR/ATM signaling cascade since it is required for the proper phosphorylation of H2AX, RPA, CHEK2 and CHEK1. Plays a critical role in chromosome segregation, acting as a mediator required for the maintenance of genomic stability through modulation of MDC1, RPA and CHEK1. This chain is Centrosomal protein of 164 kDa (CEP164), found in Homo sapiens (Human).